Here is a 146-residue protein sequence, read N- to C-terminus: ALTEPQKTALKDSWKLLAGDGKTMMKSGALLFGLLFKSHPDTKKHFKHFDDATFATMDTGVGKAHGMAVFTGLGAFVSSIDDDACVNGLAKKLSRNHTARGITADDFKLLQGVFKTFLDEATGKKATNEHKAAWDALLTMLIKAHS.

The residue at position 1 (alanine 1) is an N-acetylalanine. The Globin domain maps to 1–146 (ALTEPQKTAL…LLTMLIKAHS (146 aa)). Heme b is bound by residues histidine 65 and histidine 97.

The protein belongs to the globin family. In terms of assembly, homodimer.

This chain is Globin, found in Buccinum undatum (Common whelk).